The sequence spans 452 residues: Membrane-bound lytic murein transglycosylase D (452 aa).

An N-terminal signal peptide occupies residues 1 to 15 (MKAKAILLASVLLVG). The N-palmitoyl cysteine moiety is linked to residue C16. Residue C16 is the site of S-diacylglycerol cysteine attachment. The segment at 113–198 (NMPMELVLLP…LLTVAAYNSG (86 aa)) is slt-type domain. E125 is a catalytic residue. LysM domains lie at 341 to 384 (RVYT…SLTI) and 400 to 448 (ITYR…KNNN).

This sequence belongs to the transglycosylase Slt family.

It is found in the cell membrane. It catalyses the reaction Exolytic cleavage of the (1-&gt;4)-beta-glycosidic linkage between N-acetylmuramic acid (MurNAc) and N-acetylglucosamine (GlcNAc) residues in peptidoglycan, from either the reducing or the non-reducing ends of the peptidoglycan chains, with concomitant formation of a 1,6-anhydrobond in the MurNAc residue.. Functionally, murein-degrading enzyme. May play a role in recycling of muropeptides during cell elongation and/or cell division. This chain is Membrane-bound lytic murein transglycosylase D (mltD), found in Escherichia coli O6:H1 (strain CFT073 / ATCC 700928 / UPEC).